A 150-amino-acid polypeptide reads, in one-letter code: MKPSCYDNVGKAVKRKCETTIAQKRDISLMDTGANTYLIRPNYKDKFKAGVAKECIGEILREQLYGVQYDPEEVPTLSRSLADSIKHKLKDMAFDRYKFIVQVVIGEQRGEGVKMAARCFWDADTDNYAQEIYMNDSLFCVAAAFAVYYY.

The protein belongs to the dynein light chain Tctex-type family.

The protein resides in the dynein axonemal particle. In terms of biological role, acts as one of several non-catalytic accessory components of the cytoplasmic dynein 2 complex (dynein-2 complex), a motor protein complex that drives the movement of cargos along microtubules within cilia and flagella in concert with the intraflagellar transport (IFT) system. Required for proper retrograde ciliary transport. The polypeptide is Dynein light chain Tctex-type protein 2B (dynlt2b) (Danio rerio (Zebrafish)).